A 158-amino-acid chain; its full sequence is Kalata-B3/B6 (158 aa).

The N-terminal stretch at 1–22 is a signal peptide; sequence MAKFTKSLVLCLLLAAFVGAFG. Residues 23-66 constitute a propeptide that is removed on maturation; that stretch reads AELSEADKANVVNEIAANIQREILKGVKSSETTLTMFLKEMQLK. The cyclopeptide (Gly-Asn) cross-link spans 67-96; that stretch reads GLPTCGETCFGGTCNTPGCSCSSWPICTRN. 3 cysteine pairs are disulfide-bonded: cysteine 71-cysteine 85, cysteine 75-cysteine 87, and cysteine 80-cysteine 93. The propeptide occupies 97-121; that stretch reads GLPKRAGVKSSETTLTMFLKEMQLK. The segment at residues 122–151 is a cross-link (cyclopeptide (Gly-Asp)); it reads GLPTCGETCFGGTCNTPGCTCDPWPICTRD. Intrachain disulfides connect cysteine 126/cysteine 140, cysteine 130/cysteine 142, and cysteine 135/cysteine 148. Residues 152 to 158 constitute a propeptide that is removed on maturation; sequence GLPSAAA.

It belongs to the cyclotide family. Moebius subfamily. Kalata-B3 and kalata-B6 are cyclic peptides.

Functionally, probably participates in a plant defense mechanism. Has hemolytic activity. This Oldenlandia affinis protein is Kalata-B3/B6 (OAK2).